The chain runs to 246 residues: uncharacterized protein (246 aa).

Position 10-34 (Val-10–Val-34) interacts with NADP(+). Residue Ser-140 participates in substrate binding. Catalysis depends on Tyr-153, which acts as the Proton acceptor.

This sequence belongs to the short-chain dehydrogenases/reductases (SDR) family.

This is an uncharacterized protein from Staphylococcus saprophyticus subsp. saprophyticus (strain ATCC 15305 / DSM 20229 / NCIMB 8711 / NCTC 7292 / S-41).